The chain runs to 88 residues: Small ribosomal subunit protein bS16 (88 aa).

It belongs to the bacterial ribosomal protein bS16 family.

In Geobacter sulfurreducens (strain ATCC 51573 / DSM 12127 / PCA), this protein is Small ribosomal subunit protein bS16.